The primary structure comprises 198 residues: Na(+)-translocating NADH-quinone reductase subunit E (198 aa).

A run of 6 helical transmembrane segments spans residues 11–31 (SVFI…FLAV), 35–55 (VSTS…AVPV), 77–97 (FLNF…LEMF), 110–130 (GIFL…SFMV), 140–160 (VVYG…LAGL), and 176–196 (LGIT…FSGI).

It belongs to the NqrDE/RnfAE family. In terms of assembly, composed of six subunits; NqrA, NqrB, NqrC, NqrD, NqrE and NqrF.

Its subcellular location is the cell inner membrane. The catalysed reaction is a ubiquinone + n Na(+)(in) + NADH + H(+) = a ubiquinol + n Na(+)(out) + NAD(+). Its function is as follows. NQR complex catalyzes the reduction of ubiquinone-1 to ubiquinol by two successive reactions, coupled with the transport of Na(+) ions from the cytoplasm to the periplasm. NqrA to NqrE are probably involved in the second step, the conversion of ubisemiquinone to ubiquinol. This is Na(+)-translocating NADH-quinone reductase subunit E from Actinobacillus succinogenes (strain ATCC 55618 / DSM 22257 / CCUG 43843 / 130Z).